The following is a 427-amino-acid chain: Adenylosuccinate synthetase (427 aa).

GTP is bound by residues 12-18 (GDEGKGK) and 40-42 (GHT). Asp13 acts as the Proton acceptor in catalysis. 2 residues coordinate Mg(2+): Asp13 and Gly40. Residues 13 to 16 (DEGK), 38 to 41 (NAGH), Thr128, Arg142, Gln223, Thr238, and Arg302 contribute to the IMP site. The Proton donor role is filled by His41. 298-304 (TTTGRPR) lines the substrate pocket. GTP-binding positions include Arg304, 330–332 (KLD), and 412–414 (GVG).

This sequence belongs to the adenylosuccinate synthetase family. In terms of assembly, homodimer. Mg(2+) is required as a cofactor.

The protein resides in the cytoplasm. It carries out the reaction IMP + L-aspartate + GTP = N(6)-(1,2-dicarboxyethyl)-AMP + GDP + phosphate + 2 H(+). Its pathway is purine metabolism; AMP biosynthesis via de novo pathway; AMP from IMP: step 1/2. In terms of biological role, plays an important role in the de novo pathway of purine nucleotide biosynthesis. Catalyzes the first committed step in the biosynthesis of AMP from IMP. The polypeptide is Adenylosuccinate synthetase (Pelotomaculum thermopropionicum (strain DSM 13744 / JCM 10971 / SI)).